Consider the following 142-residue polypeptide: Deoxyuridine 5'-triphosphate nucleotidohydrolase (142 aa).

Residues 62 to 64 (RSG), Asn75, and 79 to 81 (TID) contribute to the substrate site.

It belongs to the dUTPase family. It depends on Mg(2+) as a cofactor.

The enzyme catalyses dUTP + H2O = dUMP + diphosphate + H(+). It participates in pyrimidine metabolism; dUMP biosynthesis; dUMP from dCTP (dUTP route): step 2/2. Its function is as follows. This enzyme is involved in nucleotide metabolism: it produces dUMP, the immediate precursor of thymidine nucleotides and it decreases the intracellular concentration of dUTP so that uracil cannot be incorporated into DNA. The polypeptide is Deoxyuridine 5'-triphosphate nucleotidohydrolase (Crocosphaera subtropica (strain ATCC 51142 / BH68) (Cyanothece sp. (strain ATCC 51142))).